The chain runs to 275 residues: 4-hydroxy-3-methylbut-2-enyl diphosphate reductase (275 aa).

C12 provides a ligand contact to [4Fe-4S] cluster. Positions 40 and 70 each coordinate (2E)-4-hydroxy-3-methylbut-2-enyl diphosphate. Positions 40 and 70 each coordinate dimethylallyl diphosphate. H40 and H70 together coordinate isopentenyl diphosphate. C92 serves as a coordination point for [4Fe-4S] cluster. A (2E)-4-hydroxy-3-methylbut-2-enyl diphosphate-binding site is contributed by H119. Position 119 (H119) interacts with dimethylallyl diphosphate. Isopentenyl diphosphate is bound at residue H119. E121 serves as the catalytic Proton donor. Position 151 (T151) interacts with (2E)-4-hydroxy-3-methylbut-2-enyl diphosphate. C181 lines the [4Fe-4S] cluster pocket. Positions 209, 210, 211, and 251 each coordinate (2E)-4-hydroxy-3-methylbut-2-enyl diphosphate. Residues S209, S210, N211, and S251 each coordinate dimethylallyl diphosphate. Positions 209, 210, 211, and 251 each coordinate isopentenyl diphosphate.

It belongs to the IspH family. Requires [4Fe-4S] cluster as cofactor.

It catalyses the reaction isopentenyl diphosphate + 2 oxidized [2Fe-2S]-[ferredoxin] + H2O = (2E)-4-hydroxy-3-methylbut-2-enyl diphosphate + 2 reduced [2Fe-2S]-[ferredoxin] + 2 H(+). The enzyme catalyses dimethylallyl diphosphate + 2 oxidized [2Fe-2S]-[ferredoxin] + H2O = (2E)-4-hydroxy-3-methylbut-2-enyl diphosphate + 2 reduced [2Fe-2S]-[ferredoxin] + 2 H(+). Its pathway is isoprenoid biosynthesis; dimethylallyl diphosphate biosynthesis; dimethylallyl diphosphate from (2E)-4-hydroxy-3-methylbutenyl diphosphate: step 1/1. The protein operates within isoprenoid biosynthesis; isopentenyl diphosphate biosynthesis via DXP pathway; isopentenyl diphosphate from 1-deoxy-D-xylulose 5-phosphate: step 6/6. Catalyzes the conversion of 1-hydroxy-2-methyl-2-(E)-butenyl 4-diphosphate (HMBPP) into a mixture of isopentenyl diphosphate (IPP) and dimethylallyl diphosphate (DMAPP). Acts in the terminal step of the DOXP/MEP pathway for isoprenoid precursor biosynthesis. This chain is 4-hydroxy-3-methylbut-2-enyl diphosphate reductase, found in Thermotoga sp. (strain RQ2).